Reading from the N-terminus, the 346-residue chain is MHSSLIKLGFLLLLLQVSLSHAQLSPSFYDKTCPQVFDIVTNTIVNALRSDPRIAASILRLHFHDCFVNGCDASILLDNTTSFRTEKDAFGNANSARGFDVIDKMKAAIEKACPRTVSCADMLAIAAKESIVLAGGPSWMVPNGRRDSLRGFMDLANDNLPGPSSTLKQLKDRFKNVGLDRSSDLVALSGGHTFGKSQCQFIMDRLYNFGETGLPDPTLDKSYLATLRKQCPRNGNQSVLVDFDLRTPTLFDNKYYVNLKENKGLIQSDQELFSSPDAADTLPLVRAYADGQGTFFDAFVKAIIRMSSLSPLTGKQGEIRLNCRVVNSKSKIMDVVDDALEFASFM.

An N-terminal signal peptide occupies residues 1 to 22 (MHSSLIKLGFLLLLLQVSLSHA). Pyrrolidone carboxylic acid is present on glutamine 23. Intrachain disulfides connect cysteine 33/cysteine 113, cysteine 66/cysteine 71, cysteine 119/cysteine 323, and cysteine 199/cysteine 231. The active-site Proton acceptor is the histidine 64. Ca(2+) contacts are provided by aspartate 65, valine 68, glycine 70, aspartate 72, and serine 74. Asparagine 79 is a glycosylation site (N-linked (GlcNAc...) asparagine). Residue proline 161 coordinates substrate. Histidine 192 contacts heme b. Threonine 193 serves as a coordination point for Ca(2+). Asparagine 236 carries N-linked (GlcNAc...) asparagine glycosylation. Residues aspartate 244, threonine 247, and aspartate 252 each contribute to the Ca(2+) site.

This sequence belongs to the peroxidase family. Classical plant (class III) peroxidase subfamily. Heme b is required as a cofactor. It depends on Ca(2+) as a cofactor.

It is found in the secreted. The protein resides in the vacuole. It carries out the reaction 2 a phenolic donor + H2O2 = 2 a phenolic radical donor + 2 H2O. Its function is as follows. Removal of H(2)O(2), oxidation of toxic reductants, biosynthesis and degradation of lignin, suberization, auxin catabolism, response to environmental stresses such as wounding, pathogen attack and oxidative stress. These functions might be dependent on each isozyme/isoform in each plant tissue. The protein is Peroxidase 38 (PER38) of Arabidopsis thaliana (Mouse-ear cress).